The following is a 540-amino-acid chain: Probable feruloyl esterase B-1 (540 aa).

Positions 1–18 (MLVMQLLLPFLASTAAAA) are cleaved as a signal peptide. N-linked (GlcNAc...) asparagine glycans are attached at residues N28, N49, N66, N95, N113, and N195. 2 disulfides stabilise this stretch: C41-C90 and C76-C129. Cystine bridges form between C202/C458, C271/C288, and C297/C308. S203 (acyl-ester intermediate) is an active-site residue. N234 carries N-linked (GlcNAc...) asparagine glycosylation. Residues D272, D275, A277, D279, and I281 each coordinate Ca(2+). Residues N298, N328, and N367 are each glycosylated (N-linked (GlcNAc...) asparagine). Active-site charge relay system residues include D417 and H457. The N-linked (GlcNAc...) asparagine glycan is linked to N506. The cysteines at positions 517 and 539 are disulfide-linked.

The protein belongs to the tannase family. As to quaternary structure, homodimer.

It localises to the secreted. The catalysed reaction is feruloyl-polysaccharide + H2O = ferulate + polysaccharide.. Its function is as follows. Involved in degradation of plant cell walls. Hydrolyzes the feruloyl-arabinose ester bond in arabinoxylans as well as the feruloyl-galactose and feruloyl-arabinose ester bonds in pectin. The polypeptide is Probable feruloyl esterase B-1 (faeB-1) (Aspergillus oryzae (strain ATCC 42149 / RIB 40) (Yellow koji mold)).